The chain runs to 73 residues: U3-agatoxin-Ao1k (73 aa).

The first 20 residues, 1-20, serve as a signal peptide directing secretion; the sequence is MRTIISLLLLSAMVFAVIEA. Residues 21 to 34 constitute a propeptide that is removed on maturation; it reads ISLEEGLQLFEGER. Intrachain disulfides connect Cys-36–Cys-52, Cys-43–Cys-57, Cys-51–Cys-67, and Cys-59–Cys-65. Ser-71 carries the post-translational modification Serine amide.

Belongs to the neurotoxin 07 (Beta/delta-agtx) family. 03 (aga-4) subfamily. Aga sub-subfamily. Expressed by the venom gland.

It is found in the secreted. Insecticidal neurotoxin that modulates the insect Nav channel (DmNaV1/tipE (para/tipE)) in a unique manner, with both the activation and inactivation processes being affected. The voltage dependence of activation is shifted toward more hyperpolarized potentials (analogous to site 4 toxins) and a non-inactivating persistent sodium current is induced (site 3-like action). Interestingly, both effects take place in a voltage-dependent manner, producing a bell-shaped curve between -80 and 0 mV. Compared to beta/delta-agatoxin-1 to -3, this toxin appears to affect the insect sodium channel only weakly. This is U3-agatoxin-Ao1k from Agelena orientalis (Funnel-web spider).